The following is a 535-amino-acid chain: Beta-glucosidase 47 (535 aa).

Positions 1 to 38 are cleaved as a signal peptide; the sequence is MKKSIVYEIMETKSSMYLSQFRLWLCFIITTLVSLSSS. Gln73 provides a ligand contact to a beta-D-glucoside. N-linked (GlcNAc...) asparagine glycosylation occurs at Asn93. A beta-D-glucoside is bound by residues His175 and 220–221; that span reads NE. Residue Glu221 is the Proton donor of the active site. Cys240 and Cys247 are oxidised to a cystine. Residue Asn246 is glycosylated (N-linked (GlcNAc...) asparagine). Tyr363 contributes to the a beta-D-glucoside binding site. A disulfide bond links Cys371 and Cys376. Asn419 carries N-linked (GlcNAc...) asparagine glycosylation. A beta-D-glucoside is bound at residue Glu426. The Nucleophile role is filled by Glu426. A glycan (N-linked (GlcNAc...) asparagine) is linked at Asn432. Residues Trp470, 477 to 478, and Phe486 each bind a beta-D-glucoside; that span reads EW.

The protein belongs to the glycosyl hydrolase 1 family.

The enzyme catalyses Hydrolysis of terminal, non-reducing beta-D-glucosyl residues with release of beta-D-glucose.. The polypeptide is Beta-glucosidase 47 (Arabidopsis thaliana (Mouse-ear cress)).